The primary structure comprises 95 residues: MPRSLKKGPFVDGHLFEKIYKAKETGDRKVIKTWSRRSTIVPEFVGITVAVHNGKKFIPVFITENMVGHKLGEFAPTRTFYGHAGDKKSKVKGKK.

The protein belongs to the universal ribosomal protein uS19 family.

Its function is as follows. Protein S19 forms a complex with S13 that binds strongly to the 16S ribosomal RNA. This Syntrophobacter fumaroxidans (strain DSM 10017 / MPOB) protein is Small ribosomal subunit protein uS19.